Consider the following 619-residue polypeptide: UvrABC system protein C (619 aa).

The 79-residue stretch at 20 to 98 (TAPGVYRMYA…IKSLSPRYNV (79 aa)) folds into the GIY-YIG domain. The UVR domain occupies 207 to 242 (DQLGEEIMHSMQQASEALEFERAARLRDLLSSLRSM).

The protein belongs to the UvrC family. As to quaternary structure, interacts with UvrB in an incision complex.

The protein localises to the cytoplasm. In terms of biological role, the UvrABC repair system catalyzes the recognition and processing of DNA lesions. UvrC both incises the 5' and 3' sides of the lesion. The N-terminal half is responsible for the 3' incision and the C-terminal half is responsible for the 5' incision. The chain is UvrABC system protein C from Xanthomonas euvesicatoria pv. vesicatoria (strain 85-10) (Xanthomonas campestris pv. vesicatoria).